The primary structure comprises 93 residues: MPRSVKKGPFYDNHLLVKVLKQKDLKNKKVIKTWSRRSTILPQFRGNTFAVYNGRVHIPVYINEDMVGHKLGEFSPTRTYRGHDKKDKKIQKK.

The disordered stretch occupies residues 73–93 (EFSPTRTYRGHDKKDKKIQKK).

This sequence belongs to the universal ribosomal protein uS19 family.

In terms of biological role, protein S19 forms a complex with S13 that binds strongly to the 16S ribosomal RNA. The sequence is that of Small ribosomal subunit protein uS19 from Phytoplasma mali (strain AT).